A 323-amino-acid chain; its full sequence is Tetraacyldisaccharide 4'-kinase (323 aa).

56–63 (TVGGVGKT) contributes to the ATP binding site.

It belongs to the LpxK family.

The catalysed reaction is a lipid A disaccharide + ATP = a lipid IVA + ADP + H(+). The protein operates within glycolipid biosynthesis; lipid IV(A) biosynthesis; lipid IV(A) from (3R)-3-hydroxytetradecanoyl-[acyl-carrier-protein] and UDP-N-acetyl-alpha-D-glucosamine: step 6/6. Its function is as follows. Transfers the gamma-phosphate of ATP to the 4'-position of a tetraacyldisaccharide 1-phosphate intermediate (termed DS-1-P) to form tetraacyldisaccharide 1,4'-bis-phosphate (lipid IVA). The chain is Tetraacyldisaccharide 4'-kinase from Legionella pneumophila (strain Corby).